A 254-amino-acid chain; its full sequence is Translation initiation factor 2 subunit alpha (254 aa).

One can recognise an S1 motif domain in the interval 10-81 (GDLVVVKITE…ERKNVDLSLK (72 aa)).

It belongs to the eIF-2-alpha family. In terms of assembly, heterotrimer composed of an alpha, a beta and a gamma chain.

In terms of biological role, eIF-2 functions in the early steps of protein synthesis by forming a ternary complex with GTP and initiator tRNA. This chain is Translation initiation factor 2 subunit alpha, found in Thermoplasma volcanium (strain ATCC 51530 / DSM 4299 / JCM 9571 / NBRC 15438 / GSS1).